The primary structure comprises 101 residues: Large ribosomal subunit protein uL24 (101 aa).

This sequence belongs to the universal ribosomal protein uL24 family. In terms of assembly, part of the 50S ribosomal subunit.

One of two assembly initiator proteins, it binds directly to the 5'-end of the 23S rRNA, where it nucleates assembly of the 50S subunit. Functionally, one of the proteins that surrounds the polypeptide exit tunnel on the outside of the subunit. This chain is Large ribosomal subunit protein uL24, found in Streptococcus mutans serotype c (strain ATCC 700610 / UA159).